The primary structure comprises 389 residues: Acetoin utilization protein AcuC (389 aa).

The protein belongs to the histone deacetylase family.

It participates in ketone degradation; acetoin degradation. Functionally, role in growth on acetoin or butanediol. Involved in the breakdown of these compounds used as a carbon source. This chain is Acetoin utilization protein AcuC (acuC), found in Staphylococcus aureus (strain COL).